A 134-amino-acid polypeptide reads, in one-letter code: Large ribosomal subunit protein bL17 (134 aa).

Belongs to the bacterial ribosomal protein bL17 family. As to quaternary structure, part of the 50S ribosomal subunit. Contacts protein L32.

This is Large ribosomal subunit protein bL17 from Paracidovorax citrulli (strain AAC00-1) (Acidovorax citrulli).